We begin with the raw amino-acid sequence, 148 residues long: Large ribosomal subunit protein uL15 (148 aa).

Over residues Met1 to Lys10 the composition is skewed to basic and acidic residues. A disordered region spans residues Met1–Arg42. The span at Gly11–Arg22 shows a compositional bias: basic residues. The span at Gly23–Gln36 shows a compositional bias: gly residues.

Belongs to the universal ribosomal protein uL15 family. Part of the 50S ribosomal subunit.

Binds to the 23S rRNA. In Ureaplasma urealyticum serovar 10 (strain ATCC 33699 / Western), this protein is Large ribosomal subunit protein uL15.